The following is a 286-amino-acid chain: Tyrosine recombinase XerA (286 aa).

The 78-residue stretch at Thr-5–Gly-82 folds into the Core-binding (CB) domain. The 177-residue stretch at Thr-98–Glu-274 folds into the Tyr recombinase domain. Catalysis depends on residues Arg-135, Lys-160, His-226, Arg-229, and His-252. Tyr-261 serves as the catalytic O-(3'-phospho-DNA)-tyrosine intermediate.

It belongs to the 'phage' integrase family. XerA subfamily.

It is found in the cytoplasm. Functionally, site-specific tyrosine recombinase, which acts by catalyzing the cutting and rejoining of the recombining DNA molecules. This Pyrococcus furiosus (strain ATCC 43587 / DSM 3638 / JCM 8422 / Vc1) protein is Tyrosine recombinase XerA.